A 277-amino-acid polypeptide reads, in one-letter code: MEMO1 family protein TRQ2_0860 (277 aa).

It belongs to the MEMO1 family.

This chain is MEMO1 family protein TRQ2_0860, found in Thermotoga sp. (strain RQ2).